We begin with the raw amino-acid sequence, 154 residues long: Myoglobin (154 aa).

The Globin domain occupies Val-2–Lys-148. Ser-4 carries the post-translational modification Phosphoserine. His-65 lines the nitrite pocket. Residue His-65 coordinates O2. A Phosphothreonine modification is found at Thr-68. His-94 serves as a coordination point for heme b.

The protein belongs to the globin family. As to quaternary structure, monomeric.

The protein localises to the cytoplasm. The protein resides in the sarcoplasm. It catalyses the reaction Fe(III)-heme b-[protein] + nitric oxide + H2O = Fe(II)-heme b-[protein] + nitrite + 2 H(+). The catalysed reaction is H2O2 + AH2 = A + 2 H2O. Monomeric heme protein which primary function is to store oxygen and facilitate its diffusion within muscle tissues. Reversibly binds oxygen through a pentacoordinated heme iron and enables its timely and efficient release as needed during periods of heightened demand. Depending on the oxidative conditions of tissues and cells, and in addition to its ability to bind oxygen, it also has a nitrite reductase activity whereby it regulates the production of bioactive nitric oxide. Under stress conditions, like hypoxia and anoxia, it also protects cells against reactive oxygen species thanks to its pseudoperoxidase activity. The polypeptide is Myoglobin (MB) (Eschrichtius robustus (California gray whale)).